A 125-amino-acid polypeptide reads, in one-letter code: Small ribosomal subunit protein uS13 (125 aa).

Positions 94–116 (GLPVRGQRTRTNARTRKGPRKAV) are enriched in basic residues. Residues 94–125 (GLPVRGQRTRTNARTRKGPRKAVRASSAKAGR) are disordered.

Belongs to the universal ribosomal protein uS13 family. In terms of assembly, part of the 30S ribosomal subunit. Forms a loose heterodimer with protein S19. Forms two bridges to the 50S subunit in the 70S ribosome.

Located at the top of the head of the 30S subunit, it contacts several helices of the 16S rRNA. In the 70S ribosome it contacts the 23S rRNA (bridge B1a) and protein L5 of the 50S subunit (bridge B1b), connecting the 2 subunits; these bridges are implicated in subunit movement. Contacts the tRNAs in the A and P-sites. In Nitrosospira multiformis (strain ATCC 25196 / NCIMB 11849 / C 71), this protein is Small ribosomal subunit protein uS13.